We begin with the raw amino-acid sequence, 509 residues long: Probable triacylglyceride transporter ML0556 (509 aa).

13 consecutive transmembrane segments (helical) span residues 48–68 (RITW…PLLS), 78–98 (LLLQ…ALAG), 112–132 (IQGV…ADLW), 146–166 (AAQE…VWLF), 171–191 (YVFW…QVSL), 203–223 (VDVV…IGLY), 232–252 (VLPS…VAFA), 272–292 (PFLS…VTLV), 309–329 (AAGL…LGGW), 339–359 (MTFV…HWPV), 381–403 (LLVA…LRVV), 410–430 (IASA…VAAL), and 477–497 (IFMI…LISS).

The protein belongs to the major facilitator superfamily.

The protein localises to the cell inner membrane. In association with lipoprotein LprG probably transports triacylglycerides (TAG) across the inner cell membrane into the periplasm; TAG probably regulates lipid metabolism and growth regulation. May be an efflux transporter and involved in maintaining correct cell wall permeability. Probably required with LprG for normal surface localization of lipoarabinomannan (LAM). The sequence is that of Probable triacylglyceride transporter ML0556 from Mycobacterium leprae (strain TN).